A 426-amino-acid chain; its full sequence is Serine--tRNA ligase (426 aa).

233–235 (TAE) contacts L-serine. 264–266 (RSE) is a binding site for ATP. Residue Glu-287 coordinates L-serine. 351–354 (EISS) is an ATP binding site. Ser-387 lines the L-serine pocket.

Belongs to the class-II aminoacyl-tRNA synthetase family. Type-1 seryl-tRNA synthetase subfamily. Homodimer. The tRNA molecule binds across the dimer.

The protein localises to the cytoplasm. The catalysed reaction is tRNA(Ser) + L-serine + ATP = L-seryl-tRNA(Ser) + AMP + diphosphate + H(+). It carries out the reaction tRNA(Sec) + L-serine + ATP = L-seryl-tRNA(Sec) + AMP + diphosphate + H(+). It participates in aminoacyl-tRNA biosynthesis; selenocysteinyl-tRNA(Sec) biosynthesis; L-seryl-tRNA(Sec) from L-serine and tRNA(Sec): step 1/1. Functionally, catalyzes the attachment of serine to tRNA(Ser). Is also able to aminoacylate tRNA(Sec) with serine, to form the misacylated tRNA L-seryl-tRNA(Sec), which will be further converted into selenocysteinyl-tRNA(Sec). This chain is Serine--tRNA ligase, found in Pseudomonas savastanoi pv. phaseolicola (strain 1448A / Race 6) (Pseudomonas syringae pv. phaseolicola (strain 1448A / Race 6)).